Reading from the N-terminus, the 222-residue chain is Ktr system potassium uptake protein A (222 aa).

The region spanning 6–122 (NKQFAVIGLG…LEKIGADRII (117 aa)) is the RCK N-terminal domain. NAD(+) is bound by residues arginine 16, 36–38 (DIN), 56–57 (NA), 78–80 (IGA), 103–105 (KAQ), histidine 109, and glutamate 125. An RCK C-terminal domain is found at 139–222 (ENVLNYIDLS…DIKRFENEGM (84 aa)).

Belongs to the KtrA potassium transport family. Homodimer, tetramer (dimer of homodimer) and octamer (tetramer of homodimer). Part of the KtrAB complex formed by an octameric catalytic ring of KtrA and a membrane associated dimer of KtrB forming a potassium channel.

The protein localises to the cell membrane. In terms of biological role, catalytic subunit of the KtrAB potassium uptake transporter. The 2 major potassium transporter complexes KtrAB and KtrCD confer resistance to both suddenly imposed and prolonged osmotic stress. The chain is Ktr system potassium uptake protein A (ktrA) from Bacillus subtilis (strain 168).